The sequence spans 131 residues: Glycine cleavage system H protein (131 aa).

Positions 24-106 (RVTVGISDHA…YGEGWIFVVE (83 aa)) constitute a Lipoyl-binding domain. Lys65 is modified (N6-lipoyllysine).

This sequence belongs to the GcvH family. In terms of assembly, the glycine cleavage system is composed of four proteins: P, T, L and H. Requires (R)-lipoate as cofactor.

Functionally, the glycine cleavage system catalyzes the degradation of glycine. The H protein shuttles the methylamine group of glycine from the P protein to the T protein. This chain is Glycine cleavage system H protein, found in Xanthomonas oryzae pv. oryzae (strain MAFF 311018).